Consider the following 51-residue polypeptide: Large ribosomal subunit protein bL33 (51 aa).

It belongs to the bacterial ribosomal protein bL33 family.

The chain is Large ribosomal subunit protein bL33 from Francisella philomiragia subsp. philomiragia (strain ATCC 25017 / CCUG 19701 / FSC 153 / O#319-036).